The following is a 122-amino-acid chain: MANQEQIIEAIKEMSVLELNDLVKAIEEEFGVTAAAPVAAAGAAGGGDAAAEKTEFDVELTSAGSSKIKVVKAVKEATGLGLKDAKELVDGAPKVIKEAMPKEDAEKLKEQLEEVGASVELK.

Belongs to the bacterial ribosomal protein bL12 family. As to quaternary structure, homodimer. Part of the ribosomal stalk of the 50S ribosomal subunit. Forms a multimeric L10(L12)X complex, where L10 forms an elongated spine to which 2 to 4 L12 dimers bind in a sequential fashion. Binds GTP-bound translation factors.

Its function is as follows. Forms part of the ribosomal stalk which helps the ribosome interact with GTP-bound translation factors. Is thus essential for accurate translation. The polypeptide is Large ribosomal subunit protein bL12 (Staphylococcus epidermidis (strain ATCC 35984 / DSM 28319 / BCRC 17069 / CCUG 31568 / BM 3577 / RP62A)).